We begin with the raw amino-acid sequence, 89 residues long: Small ribosomal subunit protein uS15 (89 aa).

Belongs to the universal ribosomal protein uS15 family. As to quaternary structure, part of the 30S ribosomal subunit. Forms a bridge to the 50S subunit in the 70S ribosome, contacting the 23S rRNA.

Functionally, one of the primary rRNA binding proteins, it binds directly to 16S rRNA where it helps nucleate assembly of the platform of the 30S subunit by binding and bridging several RNA helices of the 16S rRNA. Its function is as follows. Forms an intersubunit bridge (bridge B4) with the 23S rRNA of the 50S subunit in the ribosome. This is Small ribosomal subunit protein uS15 from Chloroherpeton thalassium (strain ATCC 35110 / GB-78).